The following is a 516-amino-acid chain: D-alanine--D-alanyl carrier protein ligase (516 aa).

156–157 (TS) serves as a coordination point for ATP. Aspartate 203 contributes to the D-alanine binding site. 298 to 303 (NAYGPT) contacts ATP. D-alanine is bound at residue valine 307. ATP contacts are provided by residues aspartate 389, 401–404 (YGGR), and lysine 503. Lysine 503 is a binding site for D-alanine.

Belongs to the ATP-dependent AMP-binding enzyme family. DltA subfamily.

Its subcellular location is the cytoplasm. The enzyme catalyses holo-[D-alanyl-carrier protein] + D-alanine + ATP = D-alanyl-[D-alanyl-carrier protein] + AMP + diphosphate. Its pathway is cell wall biogenesis; lipoteichoic acid biosynthesis. In terms of biological role, catalyzes the first step in the D-alanylation of lipoteichoic acid (LTA), the activation of D-alanine and its transfer onto the D-alanyl carrier protein (Dcp) DltC. In an ATP-dependent two-step reaction, forms a high energy D-alanyl-AMP intermediate, followed by transfer of the D-alanyl residue as a thiol ester to the phosphopantheinyl prosthetic group of the Dcp. D-alanylation of LTA plays an important role in modulating the properties of the cell wall in Gram-positive bacteria, influencing the net charge of the cell wall. This Streptococcus pneumoniae (strain ATCC 700669 / Spain 23F-1) protein is D-alanine--D-alanyl carrier protein ligase.